Consider the following 218-residue polypeptide: MNQICLEYFGNSVARVKKALENLKNGHGVMVLDDENRENEGDFVFAAETMTVEQMALTIRHGSGIVCLCLTEERCQQLELPMMVEKNSSTFQTPFTVSIEAAKGVTTGVSASDRITTIKAAISQTAKPADLHRPGHVFPLKGHPKGVLGRSGHTEAAIDLARLAGLKPAGVLCELTNDNGTMARAPEVIAFAKKHKMTVLSIEDLIEYRQTHMETNFS.

Residues R37–E38, D42, R150–T154, and E174 each bind D-ribulose 5-phosphate. A Mg(2+)-binding site is contributed by E38. H153 contributes to the Mg(2+) binding site.

The protein belongs to the DHBP synthase family. In terms of assembly, homodimer. Mg(2+) is required as a cofactor. Requires Mn(2+) as cofactor.

The enzyme catalyses D-ribulose 5-phosphate = (2S)-2-hydroxy-3-oxobutyl phosphate + formate + H(+). It functions in the pathway cofactor biosynthesis; riboflavin biosynthesis; 2-hydroxy-3-oxobutyl phosphate from D-ribulose 5-phosphate: step 1/1. Catalyzes the conversion of D-ribulose 5-phosphate to formate and 3,4-dihydroxy-2-butanone 4-phosphate. The polypeptide is 3,4-dihydroxy-2-butanone 4-phosphate synthase (Hamiltonella defensa subsp. Acyrthosiphon pisum (strain 5AT)).